Consider the following 273-residue polypeptide: Imidazole glycerol phosphate synthase subunit HisF (273 aa).

Residues Asp11 and Asp134 contribute to the active site.

It belongs to the HisA/HisF family. Heterodimer of HisH and HisF.

It localises to the cytoplasm. The enzyme catalyses 5-[(5-phospho-1-deoxy-D-ribulos-1-ylimino)methylamino]-1-(5-phospho-beta-D-ribosyl)imidazole-4-carboxamide + L-glutamine = D-erythro-1-(imidazol-4-yl)glycerol 3-phosphate + 5-amino-1-(5-phospho-beta-D-ribosyl)imidazole-4-carboxamide + L-glutamate + H(+). It functions in the pathway amino-acid biosynthesis; L-histidine biosynthesis; L-histidine from 5-phospho-alpha-D-ribose 1-diphosphate: step 5/9. In terms of biological role, IGPS catalyzes the conversion of PRFAR and glutamine to IGP, AICAR and glutamate. The HisF subunit catalyzes the cyclization activity that produces IGP and AICAR from PRFAR using the ammonia provided by the HisH subunit. The polypeptide is Imidazole glycerol phosphate synthase subunit HisF (Methanococcoides burtonii (strain DSM 6242 / NBRC 107633 / OCM 468 / ACE-M)).